Here is a 459-residue protein sequence, read N- to C-terminus: Phosphoglucosamine mutase (459 aa).

Serine 100 acts as the Phosphoserine intermediate in catalysis. Mg(2+) is bound by residues serine 100, aspartate 256, aspartate 258, and aspartate 260. Serine 100 carries the post-translational modification Phosphoserine.

This sequence belongs to the phosphohexose mutase family. Mg(2+) serves as cofactor. In terms of processing, activated by phosphorylation.

It catalyses the reaction alpha-D-glucosamine 1-phosphate = D-glucosamine 6-phosphate. In terms of biological role, catalyzes the conversion of glucosamine-6-phosphate to glucosamine-1-phosphate. The protein is Phosphoglucosamine mutase of Heliobacterium modesticaldum (strain ATCC 51547 / Ice1).